Reading from the N-terminus, the 339-residue chain is UDP-N-acetylglucosamine--N-acetylmuramyl-(pentapeptide) pyrophosphoryl-undecaprenol N-acetylglucosamine transferase (339 aa).

Residues 11–13 (TGG), asparagine 127, arginine 170, serine 188, isoleucine 235, and glutamine 280 contribute to the UDP-N-acetyl-alpha-D-glucosamine site.

This sequence belongs to the glycosyltransferase 28 family. MurG subfamily.

It is found in the cell inner membrane. The catalysed reaction is di-trans,octa-cis-undecaprenyl diphospho-N-acetyl-alpha-D-muramoyl-L-alanyl-D-glutamyl-meso-2,6-diaminopimeloyl-D-alanyl-D-alanine + UDP-N-acetyl-alpha-D-glucosamine = di-trans,octa-cis-undecaprenyl diphospho-[N-acetyl-alpha-D-glucosaminyl-(1-&gt;4)]-N-acetyl-alpha-D-muramoyl-L-alanyl-D-glutamyl-meso-2,6-diaminopimeloyl-D-alanyl-D-alanine + UDP + H(+). It functions in the pathway cell wall biogenesis; peptidoglycan biosynthesis. Cell wall formation. Catalyzes the transfer of a GlcNAc subunit on undecaprenyl-pyrophosphoryl-MurNAc-pentapeptide (lipid intermediate I) to form undecaprenyl-pyrophosphoryl-MurNAc-(pentapeptide)GlcNAc (lipid intermediate II). The sequence is that of UDP-N-acetylglucosamine--N-acetylmuramyl-(pentapeptide) pyrophosphoryl-undecaprenol N-acetylglucosamine transferase from Thermotoga sp. (strain RQ2).